Reading from the N-terminus, the 328-residue chain is Beta-ketoacyl-[acyl-carrier-protein] synthase III (328 aa).

Residues Cys122 and His255 contribute to the active site. The interval 256–260 is ACP-binding; that stretch reads QANIR. Residue Asn285 is part of the active site.

Belongs to the thiolase-like superfamily. FabH family. As to quaternary structure, homodimer.

Its subcellular location is the cytoplasm. The enzyme catalyses malonyl-[ACP] + acetyl-CoA + H(+) = 3-oxobutanoyl-[ACP] + CO2 + CoA. It functions in the pathway lipid metabolism; fatty acid biosynthesis. Its function is as follows. Catalyzes the condensation reaction of fatty acid synthesis by the addition to an acyl acceptor of two carbons from malonyl-ACP. Catalyzes the first condensation reaction which initiates fatty acid synthesis and may therefore play a role in governing the total rate of fatty acid production. Possesses both acetoacetyl-ACP synthase and acetyl transacylase activities. Its substrate specificity determines the biosynthesis of branched-chain and/or straight-chain of fatty acids. The chain is Beta-ketoacyl-[acyl-carrier-protein] synthase III from Polynucleobacter necessarius subsp. necessarius (strain STIR1).